The primary structure comprises 272 residues: TIP41-like protein (272 aa).

K106 bears the N6-acetyllysine mark. The interaction with PPP2CA stretch occupies residues 173-272 (RVMPSSFFLL…ADSQKSTQVE (100 aa)). S265 is modified (phosphoserine).

This sequence belongs to the TIP41 family. As to quaternary structure, isoform 1 interacts with PPP2CA. Isoform 2 does not interact with PPP2CA. Interacts with PPP2CB, PPP4C and PPP6C. Interacts with IGBP1; the interaction is dependent on PPP2CA. Associates with a protein phosphatase 2A PP2A(C):IGBP1 complex. Interacts with PPP4C and PPP4R2.

The protein localises to the cytoplasm. Functionally, may be a allosteric regulator of serine/threonine-protein phosphatase 2A (PP2A). Isoform 1 inhibits catalytic activity of the PP2A(D) core complex in vitro. The PP2A(C):TIPRL complex does not show phosphatase activity. Acts as a negative regulator of serine/threonine-protein phosphatase 4 probably by inhibiting the formation of the active PPP4C:PPP4R2 complex; the function is proposed to implicate it in DNA damage response by promoting H2AX phosphorylated on Ser-140 (gamma-H2AX). May play a role in the regulation of ATM/ATR signaling pathway controlling DNA replication and repair. The protein is TIP41-like protein (TIPRL) of Homo sapiens (Human).